We begin with the raw amino-acid sequence, 149 residues long: D-aminoacyl-tRNA deacylase (149 aa).

Positions 137-138 (GP) match the Gly-cisPro motif, important for rejection of L-amino acids motif.

Belongs to the DTD family. Homodimer.

Its subcellular location is the cytoplasm. It carries out the reaction glycyl-tRNA(Ala) + H2O = tRNA(Ala) + glycine + H(+). It catalyses the reaction a D-aminoacyl-tRNA + H2O = a tRNA + a D-alpha-amino acid + H(+). Its function is as follows. An aminoacyl-tRNA editing enzyme that deacylates mischarged D-aminoacyl-tRNAs. Also deacylates mischarged glycyl-tRNA(Ala), protecting cells against glycine mischarging by AlaRS. Acts via tRNA-based rather than protein-based catalysis; rejects L-amino acids rather than detecting D-amino acids in the active site. By recycling D-aminoacyl-tRNA to D-amino acids and free tRNA molecules, this enzyme counteracts the toxicity associated with the formation of D-aminoacyl-tRNA entities in vivo and helps enforce protein L-homochirality. The sequence is that of D-aminoacyl-tRNA deacylase from Clostridium novyi (strain NT).